Here is a 245-residue protein sequence, read N- to C-terminus: MTDKKDTIFQNPGPAEDFEFNSRVVEVFDDMLDRSVPFYKEVIQASAQLLQRHLKENDSVYDLGSSTGTTLLELSRVLKRQDISYVGIDASKPMLEKARLKAELYSKGDQFSFLEEDITQFCHQEAGAVILHYTLQFIRPMQREEVMRRIYASLRPGGVLLLSEKTISHQKELNRDFISIYHHFKKDRGYSELEIAQKREALENVLIPFSQNENKNLLKKVGFECVESYFQWFNFSSFMAIKPQP.

S-adenosyl-L-methionine contacts are provided by residues Y39, 64-66 (GSS), 117-118 (DI), and R199.

The protein belongs to the class I-like SAM-binding methyltransferase superfamily. Cx-SAM synthase family. In terms of assembly, homodimer.

The enzyme catalyses prephenate + S-adenosyl-L-methionine = carboxy-S-adenosyl-L-methionine + 3-phenylpyruvate + H2O. Functionally, catalyzes the conversion of S-adenosyl-L-methionine (SAM) to carboxy-S-adenosyl-L-methionine (Cx-SAM). This Desulfotalea psychrophila (strain LSv54 / DSM 12343) protein is Carboxy-S-adenosyl-L-methionine synthase.